The primary structure comprises 51 residues: Proteinase inhibitor PTI (51 aa).

4 disulfides stabilise this stretch: cysteine 3–cysteine 40, cysteine 6–cysteine 24, cysteine 7–cysteine 36, and cysteine 13–cysteine 49.

This sequence belongs to the protease inhibitor I20 (potato type II proteinase inhibitor) family.

The protein resides in the secreted. The chain is Proteinase inhibitor PTI from Solanum tuberosum (Potato).